The sequence spans 89 residues: Small ribosomal subunit protein uS15 (89 aa).

It belongs to the universal ribosomal protein uS15 family. Part of the 30S ribosomal subunit. Forms a bridge to the 50S subunit in the 70S ribosome, contacting the 23S rRNA.

In terms of biological role, one of the primary rRNA binding proteins, it binds directly to 16S rRNA where it helps nucleate assembly of the platform of the 30S subunit by binding and bridging several RNA helices of the 16S rRNA. Forms an intersubunit bridge (bridge B4) with the 23S rRNA of the 50S subunit in the ribosome. In Ligilactobacillus salivarius (strain UCC118) (Lactobacillus salivarius), this protein is Small ribosomal subunit protein uS15.